A 217-amino-acid chain; its full sequence is 3,4-dihydroxy-2-butanone 4-phosphate synthase (217 aa).

D-ribulose 5-phosphate contacts are provided by residues 37-38 (RE), aspartate 42, 150-154 (RGGHT), and glutamate 174. Glutamate 38 contributes to the Mg(2+) binding site. Residue histidine 153 coordinates Mg(2+).

This sequence belongs to the DHBP synthase family. Homodimer. Requires Mg(2+) as cofactor. Mn(2+) is required as a cofactor.

The enzyme catalyses D-ribulose 5-phosphate = (2S)-2-hydroxy-3-oxobutyl phosphate + formate + H(+). It functions in the pathway cofactor biosynthesis; riboflavin biosynthesis; 2-hydroxy-3-oxobutyl phosphate from D-ribulose 5-phosphate: step 1/1. In terms of biological role, catalyzes the conversion of D-ribulose 5-phosphate to formate and 3,4-dihydroxy-2-butanone 4-phosphate. The protein is 3,4-dihydroxy-2-butanone 4-phosphate synthase of Klebsiella pneumoniae subsp. pneumoniae (strain ATCC 700721 / MGH 78578).